A 257-amino-acid polypeptide reads, in one-letter code: Ribonuclease HII (257 aa).

The RNase H type-2 domain maps to 72 to 257 (TYIAGIDEVG…FAPIKDMIQK (186 aa)). Positions 78, 79, and 170 each coordinate a divalent metal cation.

It belongs to the RNase HII family. It depends on Mn(2+) as a cofactor. Mg(2+) is required as a cofactor.

The protein resides in the cytoplasm. It catalyses the reaction Endonucleolytic cleavage to 5'-phosphomonoester.. In terms of biological role, endonuclease that specifically degrades the RNA of RNA-DNA hybrids. The polypeptide is Ribonuclease HII (Bacillus cereus (strain G9842)).